An 87-amino-acid chain; its full sequence is Toxin ICK-42 (87 aa).

Positions 1 to 19 are cleaved as a signal peptide; the sequence is MKPIVYMLLFCAFTVVILG. 4 cysteine pairs are disulfide-bonded: cysteine 40–cysteine 54, cysteine 40–cysteine 77, cysteine 53–cysteine 66, and cysteine 80–cysteine 87.

Belongs to the neurotoxin 27 (Jztx-72) family. ICK-41 subfamily. As to expression, expressed by the venom gland.

Its subcellular location is the secreted. Probable neurotoxin with ion channel impairing activity. This chain is Toxin ICK-42, found in Trittame loki (Brush-footed trapdoor spider).